Reading from the N-terminus, the 472-residue chain is Eukaryotic translation initiation factor 2 subunit 3, X-linked (472 aa).

Position 2 is an N-acetylalanine (A2). At S16 the chain carries Phosphoserine. Residues 39-248 (QATINIGTIG…IVKKIPVPPR (210 aa)) enclose the tr-type G domain. Residues 48–55 (GHVAHGKS) are G1. 51–56 (AHGKST) contacts GTP. A G2 region spans residues 76–80 (NITIK). The interval 134–137 (DCPG) is G3. Residues 190–193 (NKID) and 225–227 (SAQ) contribute to the GTP site. Residues 190-193 (NKID) are G4. Residues 225-227 (SAQ) are G5. Residues 457 to 469 (GQIRRGVTIKPTV) are interacts with Cdc123.

This sequence belongs to the TRAFAC class translation factor GTPase superfamily. Classic translation factor GTPase family. EIF2G subfamily. As to quaternary structure, eukaryotic translation initiation factor 2 eIF2 is a heterotrimeric complex composed of an alpha (EIF2S1), a beta (EIF2S2) and a gamma (EIF2S3) chain. eIF2 is member of the 43S pre-initiation complex (43S PIC). Interacts (via C-terminus) with CDC123; the interaction is direct. In terms of tissue distribution, widely expressed.

It localises to the cytoplasm. It is found in the cytosol. The catalysed reaction is GTP + H2O = GDP + phosphate + H(+). Member of the eIF2 complex that functions in the early steps of protein synthesis by forming a ternary complex with GTP and initiator tRNA. This complex binds to a 40S ribosomal subunit, followed by mRNA binding to form the 43S pre-initiation complex (43S PIC). Junction of the 60S ribosomal subunit to form the 80S initiation complex is preceded by hydrolysis of the GTP bound to eIF2 and release of an eIF2-GDP binary complex. In order for eIF2 to recycle and catalyze another round of initiation, the GDP bound to eIF2 must exchange with GTP by way of a reaction catalyzed by eIF-2B. Along with its paralog on chromosome Y, may contribute to spermatogenesis up to the round spermatid stage. This chain is Eukaryotic translation initiation factor 2 subunit 3, X-linked (Eif2s3), found in Rattus norvegicus (Rat).